We begin with the raw amino-acid sequence, 362 residues long: Putative G-protein coupled receptor B0244.5 (362 aa).

The Extracellular portion of the chain corresponds to 1-47; sequence MQNIFENCSYHSKYEPYFLNCTNTTNQCVLIQDVGIIQAIDFWANLC. Asn7, Asn20, and Asn23 each carry an N-linked (GlcNAc...) asparagine glycan. The helical transmembrane segment at 48–68 threads the bilayer; it reads IPFTLFVIAFILNGYYLSILI. The Cytoplasmic portion of the chain corresponds to 69 to 81; it reads PEFRKMNDTTKKQ. Residues 82-102 form a helical membrane-spanning segment; sequence YIFVVSRGISSLSASSIMMVL. Topologically, residues 103-125 are extracellular; it reads RLLKMLSTSFTVYFLFFLIDDLS. Residues 126 to 145 form a helical membrane-spanning segment; it reads FYSLLGSYVGSTLLLYLATV. Over 146–161 the chain is Cytoplasmic; the sequence is RPIFYSIQISVRIVYK. Residues 162–182 form a helical membrane-spanning segment; sequence FALVNVLLAVVLAVTTAIFQA. Residues 183–204 are Extracellular-facing; the sequence is AEVSDGFFHCDVQHCQPIINIA. A helical transmembrane segment spans residues 205–225; sequence MFVIIATSFLIPIITLTFVLV. Over 226–255 the chain is Cytoplasmic; it reads TLCFQKSRTQSIGNFTVDNSVYKSARTRLA. The chain crosses the membrane as a helical span at residues 256–276; that stretch reads WTLFTFTLISLTEMIPSSFLV. Residues 277–295 lie on the Extracellular side of the membrane; it reads NLRVEDTITICVNFYQADH. Residues 296-316 form a helical membrane-spanning segment; it reads LFIPAIMNSFQTLAWGIALIV. The Cytoplasmic portion of the chain corresponds to 317–362; it reads DPLCALLFDPRIRKVWVEHVSRLSIIIGRSFEACCHSNLNKEIQDK.

Belongs to the G-protein coupled receptor 1 family. B0244 subfamily.

Its subcellular location is the cell membrane. The chain is Putative G-protein coupled receptor B0244.5 from Caenorhabditis elegans.